Consider the following 208-residue polypeptide: Protein-L-isoaspartate O-methyltransferase (208 aa).

The active site involves Ser59.

It belongs to the methyltransferase superfamily. L-isoaspartyl/D-aspartyl protein methyltransferase family.

The protein localises to the cytoplasm. The catalysed reaction is [protein]-L-isoaspartate + S-adenosyl-L-methionine = [protein]-L-isoaspartate alpha-methyl ester + S-adenosyl-L-homocysteine. In terms of biological role, catalyzes the methyl esterification of L-isoaspartyl residues in peptides and proteins that result from spontaneous decomposition of normal L-aspartyl and L-asparaginyl residues. It plays a role in the repair and/or degradation of damaged proteins. The protein is Protein-L-isoaspartate O-methyltransferase of Serratia proteamaculans (strain 568).